A 233-amino-acid chain; its full sequence is MSVISMKQLLEAGVHFGHQTRRWNPKMKRYIFTERNGIYIIDLQKTVKKVEEAFKVMRDIAAEGGDILFVGTKKQAQEAIKEEATRAGMYFVNQRWLGGTLTNFQTIQKRIKRLKDIERMQEDGTFEVLPKKEVVQLKKELERLEKFLGGIKDMKGLPSALFVVDPRKERIAVAEARKLHIPIIGIVDTNCDPDEIDHVIPANDDAIRAVKLLTSKMADAILEAKQGEETVTA.

Belongs to the universal ribosomal protein uS2 family.

The chain is Small ribosomal subunit protein uS2 from Bacillus anthracis.